The following is a 255-amino-acid chain: Hydroxyacylglutathione hydrolase (255 aa).

Zn(2+)-binding residues include His-56, His-58, Asp-60, His-61, His-114, Asp-133, and His-171.

The protein belongs to the metallo-beta-lactamase superfamily. Glyoxalase II family. In terms of assembly, monomer. Requires Zn(2+) as cofactor.

The enzyme catalyses an S-(2-hydroxyacyl)glutathione + H2O = a 2-hydroxy carboxylate + glutathione + H(+). It participates in secondary metabolite metabolism; methylglyoxal degradation; (R)-lactate from methylglyoxal: step 2/2. Functionally, thiolesterase that catalyzes the hydrolysis of S-D-lactoyl-glutathione to form glutathione and D-lactic acid. The protein is Hydroxyacylglutathione hydrolase of Bradyrhizobium sp. (strain ORS 278).